Here is a 152-residue protein sequence, read N- to C-terminus: Small ribosomal subunit protein bS16 (152 aa).

The segment at 84–152 (WKWEASNNPQ…EAAAEEEKSE (69 aa)) is disordered. Basic and acidic residues predominate over residues 97 to 123 (PGQKAKELAAEKAEKEADRKAAEEEAK). Residues 124-144 (AAAAAPAAEEAPAEEAPAAEA) are compositionally biased toward low complexity.

It belongs to the bacterial ribosomal protein bS16 family.

The chain is Small ribosomal subunit protein bS16 from Maricaulis maris (strain MCS10) (Caulobacter maris).